The sequence spans 421 residues: CinA-like protein (421 aa).

It belongs to the CinA family.

The polypeptide is CinA-like protein (Myxococcus xanthus (strain DK1622)).